A 271-amino-acid chain; its full sequence is Putative phosphoenolpyruvate synthase regulatory protein (271 aa).

151 to 158 (GVSRSGKT) is a binding site for ADP.

It belongs to the pyruvate, phosphate/water dikinase regulatory protein family. PSRP subfamily.

The catalysed reaction is [pyruvate, water dikinase] + ADP = [pyruvate, water dikinase]-phosphate + AMP + H(+). It carries out the reaction [pyruvate, water dikinase]-phosphate + phosphate + H(+) = [pyruvate, water dikinase] + diphosphate. Bifunctional serine/threonine kinase and phosphorylase involved in the regulation of the phosphoenolpyruvate synthase (PEPS) by catalyzing its phosphorylation/dephosphorylation. This is Putative phosphoenolpyruvate synthase regulatory protein from Burkholderia vietnamiensis (strain G4 / LMG 22486) (Burkholderia cepacia (strain R1808)).